Reading from the N-terminus, the 554-residue chain is 3-(3-hydroxy-phenyl)propionate/3-hydroxycinnamic acid hydroxylase (554 aa).

FAD contacts are provided by residues 17–46 (QVAIAGAGPVGLMMANYLGQMGIDVLVVEK) and 285–295 (FRIDRVLLAGD).

This sequence belongs to the PheA/TfdB FAD monooxygenase family. The cofactor is FAD.

The enzyme catalyses 3-(3-hydroxyphenyl)propanoate + NADH + O2 + H(+) = 3-(2,3-dihydroxyphenyl)propanoate + NAD(+) + H2O. It carries out the reaction (2E)-3-(3-hydroxyphenyl)prop-2-enoate + NADH + O2 + H(+) = (2E)-3-(2,3-dihydroxyphenyl)prop-2-enoate + NAD(+) + H2O. Its pathway is aromatic compound metabolism; 3-phenylpropanoate degradation. Functionally, catalyzes the insertion of one atom of molecular oxygen into position 2 of the phenyl ring of 3-(3-hydroxyphenyl)propionate (3-HPP) and hydroxycinnamic acid (3HCI). The polypeptide is 3-(3-hydroxy-phenyl)propionate/3-hydroxycinnamic acid hydroxylase (Escherichia coli (strain K12 / DH10B)).